A 468-amino-acid polypeptide reads, in one-letter code: Protein maelstrom 2 (468 aa).

Residues 2–69 (PPKKHSGFMM…LTRVKKERLN (68 aa)) constitute a DNA-binding region (HMG box). The interval 374 to 393 (KEDSPTVLSPASSRRSLASS) is disordered. Over residues 381-393 (LSPASSRRSLASS) the composition is skewed to low complexity.

This sequence belongs to the maelstrom family.

The protein resides in the cytoplasm. It is found in the nucleus. Its function is as follows. Involved both in the piRNA and miRNA metabolic processes. As a component of the meiotic nuage, plays a central role during oogenesis by repressing transposable elements and preventing their mobilization, which is essential for the germline integrity. Repression of transposable elements is mediated via the piRNA metabolic process, which mediates the repression of transposable elements during meiosis by forming complexes composed of piRNAs and Piwi proteins and governs the repression of transposons. As a nuclear component, it is required for proper differentiation in the germline stem cell (GSC) lineage by repressing microRNA-7 (miR-7), thereby acting as an indirect regulator of bag-of-marbles (Bam). Acts by binding to the promoter of miR-7 gene and repressing its expression; miR-7 repression alleviates the Bam repression by miR-7, thereby allowing differentiation in the germline stem cell (GSC) lineage. This is Protein maelstrom 2 (mael2) from Drosophila ananassae (Fruit fly).